The primary structure comprises 211 residues: MNQTGSTVAINLAKKLYDAGIRDNLVLQAIANTPREMFLDAALAHKAYENTALPIGQGQTISQPYIVARMTELVMQNRPQRVLEVGTGSGYQAAILAKLVPELCTIERIKALQIQARQRLKRLDLHNVSFKYGDGWLGWPNRGPFDAIMVTAAAASLPTALLEQLSEGGRLIIPVGEDAQQLLAITRKGQEYSSEVIESVKFVPLVNGNLA.

Residue S62 is part of the active site.

Belongs to the methyltransferase superfamily. L-isoaspartyl/D-aspartyl protein methyltransferase family.

It localises to the cytoplasm. It carries out the reaction [protein]-L-isoaspartate + S-adenosyl-L-methionine = [protein]-L-isoaspartate alpha-methyl ester + S-adenosyl-L-homocysteine. In terms of biological role, catalyzes the methyl esterification of L-isoaspartyl residues in peptides and proteins that result from spontaneous decomposition of normal L-aspartyl and L-asparaginyl residues. It plays a role in the repair and/or degradation of damaged proteins. In Shewanella amazonensis (strain ATCC BAA-1098 / SB2B), this protein is Protein-L-isoaspartate O-methyltransferase.